The following is a 265-amino-acid chain: Glutamate racemase (265 aa).

Residues 9 to 10 (DS) and 41 to 42 (YS) each bind substrate. Cysteine 73 (proton donor/acceptor) is an active-site residue. 74–75 (NT) provides a ligand contact to substrate. The active-site Proton donor/acceptor is the cysteine 184. 185-186 (TH) serves as a coordination point for substrate.

It belongs to the aspartate/glutamate racemases family.

It catalyses the reaction L-glutamate = D-glutamate. The protein operates within cell wall biogenesis; peptidoglycan biosynthesis. In terms of biological role, provides the (R)-glutamate required for cell wall biosynthesis. The polypeptide is Glutamate racemase (Actinobacillus pleuropneumoniae serotype 5b (strain L20)).